A 422-amino-acid polypeptide reads, in one-letter code: Oxysterol-binding protein 7 (422 aa).

The segment at 283–313 (EAAPASSASKKEKKKEKKKAKHSKHTCSPSD) is disordered. Over residues 293–307 (KEKKKEKKKAKHSKH) the composition is skewed to basic residues. Residues 354–384 (MQAADQIKKEIEDEQRKRLQITKEEEKKERA) are a coiled coil. Positions 402 to 422 (TLAPVSNSTSSTASDAASGSN) are disordered. Positions 407 to 422 (SNSTSSTASDAASGSN) are enriched in low complexity.

The protein belongs to the OSBP family.

This chain is Oxysterol-binding protein 7 (osbG), found in Dictyostelium discoideum (Social amoeba).